The primary structure comprises 355 residues: 3-dehydroquinate synthase (355 aa).

NAD(+)-binding positions include 71-76 (EGEASK), 105-109 (GVVGD), 129-130 (TS), lysine 142, and lysine 151. Residues glutamate 184, histidine 246, and histidine 263 each contribute to the Zn(2+) site.

This sequence belongs to the sugar phosphate cyclases superfamily. Dehydroquinate synthase family. The cofactor is Co(2+). It depends on Zn(2+) as a cofactor. Requires NAD(+) as cofactor.

The protein resides in the cytoplasm. It catalyses the reaction 7-phospho-2-dehydro-3-deoxy-D-arabino-heptonate = 3-dehydroquinate + phosphate. It participates in metabolic intermediate biosynthesis; chorismate biosynthesis; chorismate from D-erythrose 4-phosphate and phosphoenolpyruvate: step 2/7. Functionally, catalyzes the conversion of 3-deoxy-D-arabino-heptulosonate 7-phosphate (DAHP) to dehydroquinate (DHQ). The protein is 3-dehydroquinate synthase of Streptococcus gordonii (strain Challis / ATCC 35105 / BCRC 15272 / CH1 / DL1 / V288).